The sequence spans 147 residues: HTH-type transcriptional regulator MntR (147 aa).

The region spanning 1 to 63 (MPTPSMEDYI…YEKYRGFVLT (63 aa)) is the HTH dtxR-type domain. Asp8, Glu11, His77, Glu99, Glu102, and His103 together coordinate Mn(2+).

It belongs to the DtxR/MntR family. Homodimer.

Its subcellular location is the cytoplasm. Its activity is regulated as follows. DNA binding is strongly activated by Mn(2+). Functionally, central regulator of manganese homeostasis. The chain is HTH-type transcriptional regulator MntR from Oceanobacillus iheyensis (strain DSM 14371 / CIP 107618 / JCM 11309 / KCTC 3954 / HTE831).